A 248-amino-acid chain; its full sequence is mRNA-decapping protein OPG122 (248 aa).

In terms of domain architecture, Nudix hydrolase spans 45–227 (HKRVSVSAIL…IAKYALDTAK (183 aa)). The Nudix box signature appears at 126–147 (GIPKRGENVPECLSREIKEEVN). Glu-132 is a Mg(2+) binding site. Glu-141 acts as the Nucleophile in catalysis. Glu-145 provides a ligand contact to Mn(2+). Asp-167 is a binding site for Mg(2+).

Belongs to the Nudix hydrolase family. Mg(2+) serves as cofactor. The cofactor is Mn(2+).

The protein localises to the host mitochondrion. Decapping enzyme that remove the protective 5'-cap from both host and viral mRNAs to commit transcripts for decay by the cellular exonuclease XRN1. Preferentially targets spliced mRNAs and since all viral genes are intronless, it preferentially targets host over viral transcripts. Acceleration of the turnover of cellular transcripts promotes the shutoff of host protein synthesis and therefore diminish the magnitude of antiviral response. In Bos taurus (Bovine), this protein is mRNA-decapping protein OPG122 (OPG122).